A 357-amino-acid polypeptide reads, in one-letter code: Queuosine-tRNA galactosyltransferase (357 aa).

It belongs to the glycosyltransferase 2 family.

The protein localises to the cytoplasm. The catalysed reaction is queuosine(34) in tRNA(Tyr) + UDP-alpha-D-galactose = O-5''-beta-D-galactosylqueuosine(34) in tRNA(Tyr) + UDP + H(+). Glycosyltransferase that specifically catalyzes galactosylation of cytoplasmic tRNA(Tyr) modified with queuosine at position 34 (queuosine(34)). Galactosylates the cyclopentene hydroxyl group of queuosine(34) in tRNA(Tyr) to form galactosyl-queuosine(34). Mannosylation of queuosine(34) in tRNA(Tyr) is required to slow-down elongation at cognate codons UAC and suppress stop codon readthrough, thereby regulating protein translation. This Rattus norvegicus (Rat) protein is Queuosine-tRNA galactosyltransferase.